The following is a 382-amino-acid chain: Alkaline serine protease ver112 (382 aa).

Positions 1-15 (MRLSIIAAVLPLALA) are cleaved as a signal peptide. A propeptide spanning residues 16–102 (APVAEPEIAP…IEQDAIFSIN (87 aa)) is cleaved from the precursor. The Inhibitor I9 domain maps to 56 to 99 (SKIPGIERVYENVLNGFSATLSNEELERLRRDPDVESIEQDAIF). The Peptidase S8 domain maps to 111 to 382 (TWGLTRISHR…VNYLAFNGAT (272 aa)). 2 cysteine pairs are disulfide-bonded: C138–C227 and C282–C353. Catalysis depends on charge relay system residues D143, H173, and S328.

The protein belongs to the peptidase S8 family.

Its subcellular location is the secreted. Its activity is regulated as follows. Inhibited by phenylmethylsulfonyl fluoride (PMSF). Functionally, serine protease which can degrade the nematode cuticle. This is Alkaline serine protease ver112 from Corniculantispora psalliotae (Lecanicillium psalliotae).